The chain runs to 98 residues: MTLIHMNILMAFSMSLVGLLMYRSHLMSALLCLEGMMLSLFVLATLTILSSHFTLANMMPIILLVFAACEAAIGLALLVMVSNTYGTDYVQSLNLLQC.

The next 3 membrane-spanning stretches (helical) occupy residues methionine 1–methionine 21, alanine 29–leucine 49, and isoleucine 61–valine 81.

It belongs to the complex I subunit 4L family. In terms of assembly, core subunit of respiratory chain NADH dehydrogenase (Complex I) which is composed of 45 different subunits.

Its subcellular location is the mitochondrion inner membrane. The enzyme catalyses a ubiquinone + NADH + 5 H(+)(in) = a ubiquinol + NAD(+) + 4 H(+)(out). In terms of biological role, core subunit of the mitochondrial membrane respiratory chain NADH dehydrogenase (Complex I) which catalyzes electron transfer from NADH through the respiratory chain, using ubiquinone as an electron acceptor. Part of the enzyme membrane arm which is embedded in the lipid bilayer and involved in proton translocation. In Balaenoptera bonaerensis (Antarctic minke whale), this protein is NADH-ubiquinone oxidoreductase chain 4L (MT-ND4L).